Reading from the N-terminus, the 108-residue chain is Small ribosomal subunit protein bS6 (108 aa).

Belongs to the bacterial ribosomal protein bS6 family.

Functionally, binds together with bS18 to 16S ribosomal RNA. The chain is Small ribosomal subunit protein bS6 from Dichelobacter nodosus (strain VCS1703A).